A 140-amino-acid polypeptide reads, in one-letter code: Putative pre-16S rRNA nuclease (140 aa).

Belongs to the YqgF nuclease family.

It is found in the cytoplasm. In terms of biological role, could be a nuclease involved in processing of the 5'-end of pre-16S rRNA. This Parabacteroides distasonis (strain ATCC 8503 / DSM 20701 / CIP 104284 / JCM 5825 / NCTC 11152) protein is Putative pre-16S rRNA nuclease.